We begin with the raw amino-acid sequence, 132 residues long: Glycerol-3-phosphate cytidylyltransferase (132 aa).

Residues 9-10 (TY) and 14-17 (HYGH) each bind CTP. Lysine 44 lines the substrate pocket. Position 46 (lysine 46) interacts with CTP. Lysine 77 is a binding site for substrate. 113–120 (RTEGISTT) is a binding site for CTP.

Belongs to the cytidylyltransferase family. Homotetramer or homodimer.

It localises to the cytoplasm. The catalysed reaction is sn-glycerol 3-phosphate + CTP + H(+) = CDP-glycerol + diphosphate. The protein operates within cell wall biogenesis; poly(ribitol phosphate) teichoic acid biosynthesis. In terms of biological role, catalyzes the transfer of the cytidylyl group of CTP to sn-glycerol 3-phosphate so the activated glycerol 3-phosphate can be used for teichoic acid synthesis, via incorporation into both the linkage unit by TarB and TarF. This chain is Glycerol-3-phosphate cytidylyltransferase, found in Staphylococcus aureus (strain NCTC 8325 / PS 47).